Here is a 369-residue protein sequence, read N- to C-terminus: Queuine tRNA-ribosyltransferase (369 aa).

The active-site Proton acceptor is the aspartate 90. Substrate is bound by residues aspartate 90–phenylalanine 94, aspartate 144, glutamine 186, and glycine 213. The interval glycine 244–aspartate 250 is RNA binding. Residue aspartate 263 is the Nucleophile of the active site. Positions 301, 303, 306, and 332 each coordinate Zn(2+).

The protein belongs to the queuine tRNA-ribosyltransferase family. In terms of assembly, homodimer. Within each dimer, one monomer is responsible for RNA recognition and catalysis, while the other monomer binds to the replacement base PreQ1. Zn(2+) is required as a cofactor.

It carries out the reaction 7-aminomethyl-7-carbaguanine + guanosine(34) in tRNA = 7-aminomethyl-7-carbaguanosine(34) in tRNA + guanine. Its pathway is tRNA modification; tRNA-queuosine biosynthesis. Its function is as follows. Catalyzes the base-exchange of a guanine (G) residue with the queuine precursor 7-aminomethyl-7-deazaguanine (PreQ1) at position 34 (anticodon wobble position) in tRNAs with GU(N) anticodons (tRNA-Asp, -Asn, -His and -Tyr). Catalysis occurs through a double-displacement mechanism. The nucleophile active site attacks the C1' of nucleotide 34 to detach the guanine base from the RNA, forming a covalent enzyme-RNA intermediate. The proton acceptor active site deprotonates the incoming PreQ1, allowing a nucleophilic attack on the C1' of the ribose to form the product. After dissociation, two additional enzymatic reactions on the tRNA convert PreQ1 to queuine (Q), resulting in the hypermodified nucleoside queuosine (7-(((4,5-cis-dihydroxy-2-cyclopenten-1-yl)amino)methyl)-7-deazaguanosine). The protein is Queuine tRNA-ribosyltransferase of Dichelobacter nodosus (strain VCS1703A).